The sequence spans 351 residues: Snurportin-1 (351 aa).

Disordered stretches follow at residues 1 to 66 and 294 to 322; these read MESS…QKGI and EQKK…EYDS. The segment covering 8-42 has biased composition (basic and acidic residues); the sequence is LYKKGLDIGEQQKQRQKELLKQQKLRRQQEQDDYR. Over residues 52–62 the composition is skewed to basic residues; the sequence is PRKKSGKRSGH. Residues 274–330 are a coiled coil; the sequence is VLQYMDAFEQKLAEHRRTLKEQKKKVNEQKEDPHTMEAEEDVESDEYDSLKRVLDQQ. Residues 294 to 310 show a composition bias toward basic and acidic residues; it reads EQKKKVNEQKEDPHTME. Residues 311–320 are compositionally biased toward acidic residues; that stretch reads AEEDVESDEY.

The protein belongs to the snurportin family. Interacts with components of the snRNP complex including SmB and Smn; these interactions are RNA-dependent. Interacts with importin-7 msk but not with importin subunit beta Fs(2)Ket; the interaction is RNA-dependent.

It is found in the nucleus. It localises to the cytoplasm. The protein localises to the U-body. The protein resides in the nucleus speckle. Its subcellular location is the cajal body. Its function is as follows. Functions as an U snRNP-specific nuclear import adapter. Involved in the trimethylguanosine (m3G)-cap-dependent nuclear import of U snRNPs. Binds specifically to the terminal m3G-cap U snRNAs. This chain is Snurportin-1, found in Drosophila melanogaster (Fruit fly).